A 1296-amino-acid chain; its full sequence is Phosphoribosylformylglycinamidine synthase (1296 aa).

The interval 304 to 323 (WPGAATGSGGEIRDEGATGR) is disordered. Residues 306–317 (GAATGSGGEIRD) and Ala677 contribute to the ATP site. Mg(2+) is bound by residues Asp678, Glu717, Asn721, and Asp885. Ser887 contacts ATP. Residues 1000 to 1013 (PDCADQEHQAKQDE) show a composition bias toward basic and acidic residues. Residues 1000–1019 (PDCADQEHQAKQDESDPGLN) form a disordered region. Positions 1043 to 1296 (VAVLREQGVN…MFRNARKQLG (254 aa)) constitute a Glutamine amidotransferase type-1 domain. The active-site Nucleophile is the Cys1136. Active-site residues include His1261 and Glu1263.

In the N-terminal section; belongs to the FGAMS family. In terms of assembly, monomer.

It localises to the cytoplasm. The enzyme catalyses N(2)-formyl-N(1)-(5-phospho-beta-D-ribosyl)glycinamide + L-glutamine + ATP + H2O = 2-formamido-N(1)-(5-O-phospho-beta-D-ribosyl)acetamidine + L-glutamate + ADP + phosphate + H(+). The protein operates within purine metabolism; IMP biosynthesis via de novo pathway; 5-amino-1-(5-phospho-D-ribosyl)imidazole from N(2)-formyl-N(1)-(5-phospho-D-ribosyl)glycinamide: step 1/2. Phosphoribosylformylglycinamidine synthase involved in the purines biosynthetic pathway. Catalyzes the ATP-dependent conversion of formylglycinamide ribonucleotide (FGAR) and glutamine to yield formylglycinamidine ribonucleotide (FGAM) and glutamate. This chain is Phosphoribosylformylglycinamidine synthase, found in Yersinia pestis bv. Antiqua (strain Antiqua).